The following is a 404-amino-acid chain: Caspase-1 (404 aa).

The CARD domain occupies 1-91 (MADKVLKDKR…HLAQTLGLSS (91 aa)). Positions 1-119 (MADKVLKDKR…SLPAFVENMP (119 aa)) are excised as a propeptide. Residues histidine 237 and cysteine 285 contribute to the active site. A propeptide spanning residues 298–316 (SPKASTDSWTHQPLMLQSD) is cleaved from the precursor. Serine 302 is subject to Phosphoserine.

This sequence belongs to the peptidase C14A family. Heterotetramer that consists of two anti-parallel arranged heterodimers, each one formed by a 20 kDa (Caspase-1 subunit p20) and a 10 kDa (Caspase-1 subunit p10) subunit. May be a component of the inflammasome, a protein complex which also includes PYCARD, CARD8 and NLRP2 and whose function would be the activation of pro-inflammatory caspases. Component of the AIM2 PANoptosome complex, a multiprotein complex that drives inflammatory cell death (PANoptosis). Both the p10 and p20 subunits interact with MEFV. Interacts with CARD17P/INCA and CARD18. Interacts with SERPINB1; this interaction regulates CASP1 activity. In terms of assembly, heterotetramer that consists of two anti-parallel arranged heterodimers, each one formed by a 20 kDa (Caspase-1 subunit p20) and a 10 kDa (Caspase-1 subunit p10) subunit. In terms of processing, the two subunits are derived from the precursor sequence by an autocatalytic mechanism. Ubiquitinated via 'Lys-11'-linked polyubiquitination. Deubiquitinated by USP8.

It is found in the cytoplasm. It localises to the cell membrane. It carries out the reaction Strict requirement for an Asp residue at position P1 and has a preferred cleavage sequence of Tyr-Val-Ala-Asp-|-.. Thiol protease involved in a variety of inflammatory processes by proteolytically cleaving other proteins, such as the precursors of the inflammatory cytokines interleukin-1 beta (IL1B) and interleukin 18 (IL18) as well as the pyroptosis inducer Gasdermin-D (GSDMD), into active mature peptides. Plays a key role in cell immunity as an inflammatory response initiator: once activated through formation of an inflammasome complex, it initiates a pro-inflammatory response through the cleavage of the two inflammatory cytokines IL1B and IL18, releasing the mature cytokines which are involved in a variety of inflammatory processes. Cleaves a tetrapeptide after an Asp residue at position P1. Also initiates pyroptosis, a programmed lytic cell death pathway, through cleavage of GSDMD. In contrast to cleavage of interleukin IL1B, recognition and cleavage of GSDMD is not strictly dependent on the consensus cleavage site but depends on an exosite interface on CASP1 that recognizes and binds the Gasdermin-D, C-terminal (GSDMD-CT) part. Cleaves and activates CASP7 in response to bacterial infection, promoting plasma membrane repair. Upon inflammasome activation, during DNA virus infection but not RNA virus challenge, controls antiviral immunity through the cleavage of CGAS, rendering it inactive. In apoptotic cells, cleaves SPHK2 which is released from cells and remains enzymatically active extracellularly. The polypeptide is Caspase-1 (CASP1) (Canis lupus familiaris (Dog)).